The chain runs to 100 residues: Urease subunit gamma (100 aa).

This sequence belongs to the urease gamma subunit family. Heterotrimer of UreA (gamma), UreB (beta) and UreC (alpha) subunits. Three heterotrimers associate to form the active enzyme.

It localises to the cytoplasm. It catalyses the reaction urea + 2 H2O + H(+) = hydrogencarbonate + 2 NH4(+). The protein operates within nitrogen metabolism; urea degradation; CO(2) and NH(3) from urea (urease route): step 1/1. This chain is Urease subunit gamma, found in Burkholderia cenocepacia (strain ATCC BAA-245 / DSM 16553 / LMG 16656 / NCTC 13227 / J2315 / CF5610) (Burkholderia cepacia (strain J2315)).